We begin with the raw amino-acid sequence, 67 residues long: Large ribosomal subunit protein bL35 (67 aa).

It belongs to the bacterial ribosomal protein bL35 family.

The protein is Large ribosomal subunit protein bL35 of Rhizobium etli (strain ATCC 51251 / DSM 11541 / JCM 21823 / NBRC 15573 / CFN 42).